A 542-amino-acid chain; its full sequence is CTP synthase (542 aa).

An amidoligase domain region spans residues 1 to 265; sequence MARYVFITGG…DNEVLAAFGI (265 aa). A CTP-binding site is contributed by Ser-13. Ser-13 is a binding site for UTP. ATP is bound by residues 14–19 and Asp-71; that span reads SLGKGI. Positions 71 and 139 each coordinate Mg(2+). CTP contacts are provided by residues 146–148, 186–191, and Lys-222; these read DIE and KTKPTQ. UTP is bound by residues 186-191 and Lys-222; that span reads KTKPTQ. The Glutamine amidotransferase type-1 domain occupies 291-541; that stretch reads TIAIVGKYTG…IEAALEQSRL (251 aa). L-glutamine is bound at residue Gly-353. Cys-380 functions as the Nucleophile; for glutamine hydrolysis in the catalytic mechanism. L-glutamine is bound by residues 381–384, Glu-404, and Arg-469; that span reads FGMQ. Residues His-514 and Glu-516 contribute to the active site.

The protein belongs to the CTP synthase family. As to quaternary structure, homotetramer.

It catalyses the reaction UTP + L-glutamine + ATP + H2O = CTP + L-glutamate + ADP + phosphate + 2 H(+). The enzyme catalyses L-glutamine + H2O = L-glutamate + NH4(+). The catalysed reaction is UTP + NH4(+) + ATP = CTP + ADP + phosphate + 2 H(+). The protein operates within pyrimidine metabolism; CTP biosynthesis via de novo pathway; CTP from UDP: step 2/2. With respect to regulation, allosterically activated by GTP, when glutamine is the substrate; GTP has no effect on the reaction when ammonia is the substrate. The allosteric effector GTP functions by stabilizing the protein conformation that binds the tetrahedral intermediate(s) formed during glutamine hydrolysis. Inhibited by the product CTP, via allosteric rather than competitive inhibition. Its function is as follows. Catalyzes the ATP-dependent amination of UTP to CTP with either L-glutamine or ammonia as the source of nitrogen. Regulates intracellular CTP levels through interactions with the four ribonucleotide triphosphates. The sequence is that of CTP synthase from Sinorhizobium medicae (strain WSM419) (Ensifer medicae).